The primary structure comprises 394 residues: 3-ketosteroid-9-alpha-monooxygenase, oxygenase component (394 aa).

One can recognise a Rieske domain in the interval 27–129; the sequence is WHCLGLAKDF…TLDQDGLLFV (103 aa). Cysteine 68, histidine 70, cysteine 87, and histidine 90 together coordinate [2Fe-2S] cluster. Fe cation contacts are provided by asparagine 175, histidine 181, and histidine 186. Position 245 (tyrosine 245) interacts with substrate. Residue aspartate 305 coordinates Fe cation.

Homotrimer. The two-component system 3-ketosteroid-9-alpha-monooxygenase is composed of an oxygenase component KshA and a reductase component KshB. Requires [2Fe-2S] cluster as cofactor. It depends on Fe cation as a cofactor.

The enzyme catalyses androsta-1,4-diene-3,17-dione + 2 reduced [2Fe-2S]-[ferredoxin] + O2 + 2 H(+) = 9alpha-hydroxyandrosta-1,4-diene-3,17-dione + 2 oxidized [2Fe-2S]-[ferredoxin] + H2O. Its function is as follows. May be involved in the degradation of cholic acid, a steroid acid found predominantly in the bile. In vitro, catalyzes the introduction of a 9alpha-hydroxyl moiety into the ring B of 3-ketosteroid substrates such as 1,4-androstadiene-3,17-dione (ADD), 4-androstene-3,17-dione (AD), 4-androstene-17beta-ol-3-one (testosterone), 4-pregnene-3,20-dione (progesterone), 3-oxo-23,24-bisnorcholesta-4-en-22-oate (4-BNC), 23,24-bisnorcholesta-4-ene-22-oate, 3-oxo-23,24-bisnorcholaesta-1,4-dien-22-oate (1,4-BNC), 23,24-bisnorcholesta-1,4-diene-22-oate and 3-oxo-23,24-bisnorcholesta-1,4-dien-22-oyl-coenzyme A thioester (1,4-BNC-CoA). KshA1 has the highest specificity for steroids possessing an isopropionyl side chain at C17. This chain is 3-ketosteroid-9-alpha-monooxygenase, oxygenase component, found in Rhodococcus rhodochrous.